A 160-amino-acid polypeptide reads, in one-letter code: Regulatory protein RecX (160 aa).

The protein belongs to the RecX family.

Its subcellular location is the cytoplasm. Its function is as follows. Modulates RecA activity. The protein is Regulatory protein RecX of Pelodictyon phaeoclathratiforme (strain DSM 5477 / BU-1).